The chain runs to 230 residues: Ribosomal RNA small subunit methyltransferase I (230 aa).

The protein belongs to the methyltransferase superfamily. RsmI family.

It localises to the cytoplasm. It carries out the reaction cytidine(1402) in 16S rRNA + S-adenosyl-L-methionine = 2'-O-methylcytidine(1402) in 16S rRNA + S-adenosyl-L-homocysteine + H(+). Functionally, catalyzes the 2'-O-methylation of the ribose of cytidine 1402 (C1402) in 16S rRNA. This is Ribosomal RNA small subunit methyltransferase I from Hydrogenobaculum sp. (strain Y04AAS1).